We begin with the raw amino-acid sequence, 1128 residues long: Phytochrome A (1128 aa).

Residues 1-21 show a composition bias toward low complexity; that stretch reads MSSSRPTQCSSSSSRTRQSSR. The disordered stretch occupies residues 1-24; the sequence is MSSSRPTQCSSSSSRTRQSSRARI. A GAF domain is found at 219–404; it reads SMEVLCNTVV…VFAVHVNKEF (186 aa). A phytochromobilin-binding site is contributed by Cys324. PAS domains lie at 620–690 and 750–834; these read VTSE…LQGK and VEGD…LAGD. The 221-residue stretch at 904–1124 folds into the Histidine kinase domain; the sequence is YMRHAINNPL…TFILSVELAS (221 aa).

This sequence belongs to the phytochrome family. As to quaternary structure, homodimer. Post-translationally, contains one covalently linked phytochromobilin chromophore.

Its function is as follows. Regulatory photoreceptor which exists in two forms that are reversibly interconvertible by light: the Pr form that absorbs maximally in the red region of the spectrum and the Pfr form that absorbs maximally in the far-red region. Photoconversion of Pr to Pfr induces an array of morphogenic responses, whereas reconversion of Pfr to Pr cancels the induction of those responses. Pfr controls the expression of a number of nuclear genes including those encoding the small subunit of ribulose-bisphosphate carboxylase, chlorophyll A/B binding protein, protochlorophyllide reductase, rRNA, etc. It also controls the expression of its own gene(s) in a negative feedback fashion. The sequence is that of Phytochrome A (PHYA) from Oryza sativa subsp. indica (Rice).